We begin with the raw amino-acid sequence, 499 residues long: Citrinin biosynthesis cluster MFS transporter mrr1 (499 aa).

A disordered region spans residues 1-29 (MKEEIDAPVSTDASGTDLENARDQPSGEK). A run of 8 helical transmembrane segments spans residues 58 to 78 (SLIT…SSVF), 95 to 115 (VMTL…LVWG), 124 to 144 (LKPL…VAVA), 155 to 175 (FFLG…LADF), 187 to 207 (LFSA…GFIV), 215 to 235 (WTAW…FLTL), 291 to 311 (ILVC…LFFV), and 327 to 347 (GIAA…CLLV). Asn-361 is a glycosylation site (N-linked (GlcNAc...) asparagine). 4 helical membrane-spanning segments follow: residues 370–390 (LPPM…FGWT), 395–415 (ISWA…LMIW), 443–463 (AVGA…GVDW), and 467–487 (LLGF…FYGA).

This sequence belongs to the major facilitator superfamily. CAR1 family.

It localises to the membrane. MFS transporter; part of the gene cluster that mediates the biosynthesis the mycotoxin citrinin, a hepato-nephrotoxic compound to humans due to inhibition of respiration complex III. The polypeptide is Citrinin biosynthesis cluster MFS transporter mrr1 (Monascus ruber (Mold)).